Reading from the N-terminus, the 844-residue chain is Fe(2+) transport protein A/Fe(2+) transporter FeoB fusion protein (844 aa).

Residues Met1–Leu73 are feoA. The interval Ile74–Phe844 is feoB. Polar residues predominate over residues Thr79–Glu106. Residues Thr79–Ala110 are disordered. One can recognise a FeoB-type G domain in the interval Val126–Gly289. Residues Gly133–Thr140, Gly158–Glu162, Asp179–Gly182, Asn240–Asp243, and Val269–Arg271 each bind GTP. Helical transmembrane passes span Val418–Leu438, Ile475–Ile495, Leu520–Met540, Pro559–Pro579, Ser581–Ala601, Met646–Tyr666, Ile786–Val806, and Trp817–Tyr837.

This sequence in the N-terminal section; belongs to the FeoA family. In the C-terminal section; belongs to the TRAFAC class TrmE-Era-EngA-EngB-Septin-like GTPase superfamily. FeoB GTPase (TC 9.A.8) family.

It localises to the cell inner membrane. Probable transporter of a GTP-driven Fe(2+) uptake system. In Porphyromonas gingivalis (strain ATCC BAA-308 / W83), this protein is Fe(2+) transport protein A/Fe(2+) transporter FeoB fusion protein.